The following is a 271-amino-acid chain: Phosphatidylglycerol--prolipoprotein diacylglyceryl transferase (271 aa).

The next 3 helical transmembrane spans lie at 17–37 (LAIH…FFLA), 63–83 (ILFL…CLFY), and 95–115 (IFAV…VLVS). Arg146 contacts a 1,2-diacyl-sn-glycero-3-phospho-(1'-sn-glycerol). A run of 3 helical transmembrane segments spans residues 182 to 202 (SQVY…WLYA), 209 to 229 (GQVS…AEFF), and 243 to 263 (MSMG…LWIW).

This sequence belongs to the Lgt family.

It is found in the cell inner membrane. It carries out the reaction L-cysteinyl-[prolipoprotein] + a 1,2-diacyl-sn-glycero-3-phospho-(1'-sn-glycerol) = an S-1,2-diacyl-sn-glyceryl-L-cysteinyl-[prolipoprotein] + sn-glycerol 1-phosphate + H(+). Its pathway is protein modification; lipoprotein biosynthesis (diacylglyceryl transfer). Functionally, catalyzes the transfer of the diacylglyceryl group from phosphatidylglycerol to the sulfhydryl group of the N-terminal cysteine of a prolipoprotein, the first step in the formation of mature lipoproteins. The protein is Phosphatidylglycerol--prolipoprotein diacylglyceryl transferase of Polaromonas naphthalenivorans (strain CJ2).